Here is a 134-residue protein sequence, read N- to C-terminus: Acyl carrier protein SF2, chloroplastic (134 aa).

Residues 1-51 (MSTTFCSSVSMQATSLAATTRISFQKPALVSTTNLSFNLRRSIPTRFSISC) constitute a chloroplast transit peptide. The 76-residue stretch at 55–130 (PETVEKVSKI…EAAELIEELV (76 aa)) folds into the Carrier domain. Residue Ser-90 is modified to O-(pantetheine 4'-phosphoryl)serine.

Belongs to the acyl carrier protein (ACP) family. In terms of processing, 4'-phosphopantetheine is transferred from CoA to a specific serine of apo-ACP by acpS. This modification is essential for activity because fatty acids are bound in thioester linkage to the sulfhydryl of the prosthetic group.

The protein resides in the plastid. Its subcellular location is the chloroplast. It participates in lipid metabolism; fatty acid biosynthesis. Functionally, carrier of the growing fatty acid chain in fatty acid biosynthesis. The sequence is that of Acyl carrier protein SF2, chloroplastic (Acl1.1) from Brassica campestris (Field mustard).